Reading from the N-terminus, the 942-residue chain is Isoleucine--tRNA ligase (942 aa).

The 'HIGH' region signature appears at 58-68; it reads PYANGDIHIGH. An L-isoleucyl-5'-AMP-binding site is contributed by Glu-566. Positions 607-611 match the 'KMSKS' region motif; that stretch reads KMSKS. Lys-610 is a binding site for ATP. Cys-905, Cys-908, Cys-925, and Cys-928 together coordinate Zn(2+).

The protein belongs to the class-I aminoacyl-tRNA synthetase family. IleS type 1 subfamily. Monomer. Zn(2+) serves as cofactor.

It localises to the cytoplasm. It catalyses the reaction tRNA(Ile) + L-isoleucine + ATP = L-isoleucyl-tRNA(Ile) + AMP + diphosphate. Catalyzes the attachment of isoleucine to tRNA(Ile). As IleRS can inadvertently accommodate and process structurally similar amino acids such as valine, to avoid such errors it has two additional distinct tRNA(Ile)-dependent editing activities. One activity is designated as 'pretransfer' editing and involves the hydrolysis of activated Val-AMP. The other activity is designated 'posttransfer' editing and involves deacylation of mischarged Val-tRNA(Ile). The protein is Isoleucine--tRNA ligase of Pseudoalteromonas atlantica (strain T6c / ATCC BAA-1087).